Consider the following 229-residue polypeptide: Interleukin-27 subunit beta (229 aa).

An N-terminal signal peptide occupies residues 1-20; sequence MTPQLLLALVLWASCPPCSG. Fibronectin type-III domains are found at residues 24–130 and 131–227; these read PPAA…IKPD and PPEG…TMSL. Asn-55 and Asn-105 each carry an N-linked (GlcNAc...) asparagine glycan.

Belongs to the type I cytokine receptor family. Type 3 subfamily. In terms of assembly, heterodimer with IL27/IL27A; not disulfide-linked. This heterodimer is known as interleukin IL-27. Heterodimer with IL12A; not disulfide-linked. This heterodimer is known as interleukin IL-35. Interacts with SQSTM1.

The protein resides in the secreted. Its function is as follows. Associates with IL27 to form the IL-27 interleukin, a heterodimeric cytokine which functions in innate immunity. IL-27 has pro- and anti-inflammatory properties, that can regulate T-helper cell development, suppress T-cell proliferation, stimulate cytotoxic T-cell activity, induce isotype switching in B-cells, and that has diverse effects on innate immune cells. Among its target cells are CD4 T-helper cells which can differentiate in type 1 effector cells (TH1), type 2 effector cells (TH2) and IL17 producing helper T-cells (TH17). It drives rapid clonal expansion of naive but not memory CD4 T-cells. It also strongly synergizes with IL-12 to trigger interferon-gamma/IFN-gamma production of naive CD4 T-cells, binds to the cytokine receptor WSX-1/TCCR. Another important role of IL-27 is its antitumor activity as well as its antiangiogenic activity with activation of production of antiangiogenic chemokines. The polypeptide is Interleukin-27 subunit beta (EBI3) (Homo sapiens (Human)).